A 550-amino-acid polypeptide reads, in one-letter code: CTP synthase (550 aa).

The interval Met-1–Leu-270 is amidoligase domain. Ser-13 contacts CTP. UTP is bound at residue Ser-13. Residues Ser-14 to Ile-19 and Asp-71 each bind ATP. 2 residues coordinate Mg(2+): Asp-71 and Glu-144. Residues Asp-151–Glu-153, Lys-191–Gln-196, and Lys-227 each bind CTP. UTP is bound by residues Lys-191–Gln-196 and Lys-227. The Glutamine amidotransferase type-1 domain maps to Thr-295–Gln-545. Gly-356 is a binding site for L-glutamine. The active-site Nucleophile; for glutamine hydrolysis is the Cys-383. Residues Leu-384–Gln-387 and Glu-407 each bind L-glutamine. The tract at residues Val-430–Gln-459 is disordered. Arg-473 contributes to the L-glutamine binding site. Residues His-518 and Glu-520 contribute to the active site.

It belongs to the CTP synthase family. In terms of assembly, homotetramer.

The enzyme catalyses UTP + L-glutamine + ATP + H2O = CTP + L-glutamate + ADP + phosphate + 2 H(+). It carries out the reaction L-glutamine + H2O = L-glutamate + NH4(+). The catalysed reaction is UTP + NH4(+) + ATP = CTP + ADP + phosphate + 2 H(+). Its pathway is pyrimidine metabolism; CTP biosynthesis via de novo pathway; CTP from UDP: step 2/2. Its activity is regulated as follows. Allosterically activated by GTP, when glutamine is the substrate; GTP has no effect on the reaction when ammonia is the substrate. The allosteric effector GTP functions by stabilizing the protein conformation that binds the tetrahedral intermediate(s) formed during glutamine hydrolysis. Inhibited by the product CTP, via allosteric rather than competitive inhibition. In terms of biological role, catalyzes the ATP-dependent amination of UTP to CTP with either L-glutamine or ammonia as the source of nitrogen. Regulates intracellular CTP levels through interactions with the four ribonucleotide triphosphates. This chain is CTP synthase, found in Bordetella parapertussis (strain 12822 / ATCC BAA-587 / NCTC 13253).